We begin with the raw amino-acid sequence, 193 residues long: DNA damage-inducible transcript 4-like protein (193 aa).

It belongs to the DDIT4 family.

The protein resides in the cytoplasm. Functionally, inhibits cell growth by regulating the TOR signaling pathway upstream of the TSC1-TSC2 complex and downstream of AKT1. The polypeptide is DNA damage-inducible transcript 4-like protein (Ddit4l) (Mus musculus (Mouse)).